A 499-amino-acid polypeptide reads, in one-letter code: BTB/POZ domain-containing protein At5g60050 (499 aa).

Low complexity predominate over residues 18–30; that stretch reads PSLSFSPSRISSP. The tract at residues 18–57 is disordered; the sequence is PSLSFSPSRISSPIKLSTASPPLPPPPPPPPNESTLSNPT. Over residues 38–49 the composition is skewed to pro residues; that stretch reads PPLPPPPPPPPN. In terms of domain architecture, BTB spans 99 to 172; the sequence is GDVKLTVVGK…MYSDDLKKKL (74 aa).

It functions in the pathway protein modification; protein ubiquitination. Functionally, may act as a substrate-specific adapter of an E3 ubiquitin-protein ligase complex (CUL3-RBX1-BTB) which mediates the ubiquitination and subsequent proteasomal degradation of target proteins. This Arabidopsis thaliana (Mouse-ear cress) protein is BTB/POZ domain-containing protein At5g60050.